The chain runs to 482 residues: Protein DETOXIFICATION 13 (482 aa).

The next 12 membrane-spanning stretches (helical) occupy residues 39–59 (LICFAAPMAAVVIAQFMLQII), 77–97 (LASSFCNVTGFSFIVGLSCAL), 124–144 (LALVCLPLTLIWLNMETLLVF), 159–179 (AACLIPGLFAYAVLQPLTRYF), 188–208 (LLITSCFVFCLHVPLCWLLVY), 218–238 (ALALSFSNCLYTIILGSLMCF), 268–288 (AAMICLEWWSYELIILLSGLL), 297–317 (VLSVCLQTTATVYSIHLAIAA), 337–357 (IVVYAAMSLAVVEILILSTSL), 381–401 (MAPLVSISLILDGLQGVLSGI), 416–436 (LGAFYLWGIPIAASLAFWIHL), and 439–459 (VGLWIGIQAGAVLQTLLLTLV).

The protein belongs to the multi antimicrobial extrusion (MATE) (TC 2.A.66.1) family.

It is found in the membrane. The chain is Protein DETOXIFICATION 13 from Arabidopsis thaliana (Mouse-ear cress).